Reading from the N-terminus, the 243-residue chain is HTH-type quorum sensing-dependent transcriptional regulator RpaR (243 aa).

Residues 174–239 (KPIRRNRLTP…AAVAKALTLG (66 aa)) enclose the HTH luxR-type domain. Residues 198-217 (AWEISVILCITERTVKFHLI) constitute a DNA-binding region (H-T-H motif).

It belongs to the autoinducer-regulated transcriptional regulatory protein family.

Its function is as follows. Responds to the quorum-sensing autoinducer 4-coumaroyl-homoserine lactone to regulate expression of several genes. Represses expression of rpaI in the absence of the inducer. The protein is HTH-type quorum sensing-dependent transcriptional regulator RpaR of Rhodopseudomonas palustris (strain ATCC BAA-98 / CGA009).